We begin with the raw amino-acid sequence, 425 residues long: Serine--tRNA ligase (425 aa).

228 to 230 provides a ligand contact to L-serine; that stretch reads TAE. 259–261 serves as a coordination point for ATP; sequence RSE. Glu-282 provides a ligand contact to L-serine. 346 to 349 serves as a coordination point for ATP; it reads EIAS. L-serine is bound at residue Ser-382.

It belongs to the class-II aminoacyl-tRNA synthetase family. Type-1 seryl-tRNA synthetase subfamily. In terms of assembly, homodimer. The tRNA molecule binds across the dimer.

It localises to the cytoplasm. It carries out the reaction tRNA(Ser) + L-serine + ATP = L-seryl-tRNA(Ser) + AMP + diphosphate + H(+). It catalyses the reaction tRNA(Sec) + L-serine + ATP = L-seryl-tRNA(Sec) + AMP + diphosphate + H(+). The protein operates within aminoacyl-tRNA biosynthesis; selenocysteinyl-tRNA(Sec) biosynthesis; L-seryl-tRNA(Sec) from L-serine and tRNA(Sec): step 1/1. Functionally, catalyzes the attachment of serine to tRNA(Ser). Is also able to aminoacylate tRNA(Sec) with serine, to form the misacylated tRNA L-seryl-tRNA(Sec), which will be further converted into selenocysteinyl-tRNA(Sec). The sequence is that of Serine--tRNA ligase from Rickettsia massiliae (strain Mtu5).